A 153-amino-acid polypeptide reads, in one-letter code: D-aminoacyl-tRNA deacylase (153 aa).

Positions 137–138 (GP) match the Gly-cisPro motif, important for rejection of L-amino acids motif.

It belongs to the DTD family. As to quaternary structure, homodimer.

The protein localises to the cytoplasm. The enzyme catalyses glycyl-tRNA(Ala) + H2O = tRNA(Ala) + glycine + H(+). The catalysed reaction is a D-aminoacyl-tRNA + H2O = a tRNA + a D-alpha-amino acid + H(+). In terms of biological role, an aminoacyl-tRNA editing enzyme that deacylates mischarged D-aminoacyl-tRNAs. Also deacylates mischarged glycyl-tRNA(Ala), protecting cells against glycine mischarging by AlaRS. Acts via tRNA-based rather than protein-based catalysis; rejects L-amino acids rather than detecting D-amino acids in the active site. By recycling D-aminoacyl-tRNA to D-amino acids and free tRNA molecules, this enzyme counteracts the toxicity associated with the formation of D-aminoacyl-tRNA entities in vivo and helps enforce protein L-homochirality. This Myxococcus xanthus (strain DK1622) protein is D-aminoacyl-tRNA deacylase.